Consider the following 346-residue polypeptide: NADH-ubiquinone oxidoreductase chain 2 (346 aa).

A run of 11 helical transmembrane segments spans residues proline 3–serine 23, histidine 25–methionine 45, tyrosine 59–methionine 79, isoleucine 96–proline 116, isoleucine 122–leucine 142, isoleucine 149–glycine 169, isoleucine 178–proline 198, leucine 200–isoleucine 220, threonine 242–proline 262, serine 274–methionine 294, and isoleucine 322–leucine 342.

Belongs to the complex I subunit 2 family. In terms of assembly, core subunit of respiratory chain NADH dehydrogenase (Complex I) which is composed of 45 different subunits. Interacts with TMEM242.

Its subcellular location is the mitochondrion inner membrane. It catalyses the reaction a ubiquinone + NADH + 5 H(+)(in) = a ubiquinol + NAD(+) + 4 H(+)(out). Core subunit of the mitochondrial membrane respiratory chain NADH dehydrogenase (Complex I) which catalyzes electron transfer from NADH through the respiratory chain, using ubiquinone as an electron acceptor. Essential for the catalytic activity and assembly of complex I. This is NADH-ubiquinone oxidoreductase chain 2 from Equus caballus (Horse).